Consider the following 846-residue polypeptide: Auxin response factor 2A (846 aa).

A compositionally biased stretch (polar residues) spans 1–12 (MAASEVSIQGYS). Positions 1–30 (MAASEVSIQGYSEPSDGSRPVSETGRSSSG) are disordered. Residues 146–248 (FCKTLTASDT…ELRVGVRRAM (103 aa)) constitute a DNA-binding region (TF-B3). Disordered stretches follow at residues 380–423 (PPAL…HSQA) and 660–693 (DMNI…GVAA). 2 stretches are compositionally biased toward polar residues: residues 398-408 (ILPTSPDSSVL) and 414-423 (SRATADHSQA). The span at 675 to 693 (SDQRSEQSKGSKVDDGVAA) shows a compositional bias: basic and acidic residues. Residues 720-804 (RSCTKVHKQG…RKIFIYTKEE (85 aa)) form the PB1 domain. 2 stretches are compositionally biased toward polar residues: residues 809 to 824 (NPGT…SSVA) and 836 to 846 (QLPSESGQAES). A disordered region spans residues 809-846 (NPGTLNSKGEDTSSVAEGSDAKEVKNLQLPSESGQAES).

This sequence belongs to the ARF family. In terms of assembly, homodimers and heterodimers. Interacts with ASR1. As to expression, expressed in root, leaf and flower. Expressed in flower buds about three days before opening including ovary, petal and sepal with the highest in stamen. Expressed in stem. Expressed in fruit. Expressed in seeds.

The protein resides in the nucleus. In terms of biological role, auxin response factors (ARFs) are transcriptional factors that bind specifically to the DNA sequence 5'-TGTCTC-3' found in the auxin-responsive promoter elements (AuxREs). Could act as transcriptional activator or repressor. Involved in the control of fruit ripening process. Regulates expression of a number of ripening regulators, transcription factors, and ethylene biosynthesis and signaling components. May act as a transcriptional repressor of auxin-responsive genes. Regulates vegetative growth, lateral root formation and flower organ senescence, possibly partially by regulating gene expression of auxin and ethylene response factor (ERF) genes. Plays a negative role in axillary shoot meristem formation. This Solanum lycopersicum (Tomato) protein is Auxin response factor 2A.